The primary structure comprises 64 residues: Large ribosomal subunit protein bL33 (64 aa).

It belongs to the bacterial ribosomal protein bL33 family.

This chain is Large ribosomal subunit protein bL33, found in Rippkaea orientalis (strain PCC 8801 / RF-1) (Cyanothece sp. (strain PCC 8801)).